Reading from the N-terminus, the 212-residue chain is Uridine kinase (212 aa).

13–20 serves as a coordination point for ATP; that stretch reads GGSGSGKT.

This sequence belongs to the uridine kinase family.

The protein localises to the cytoplasm. It carries out the reaction uridine + ATP = UMP + ADP + H(+). The catalysed reaction is cytidine + ATP = CMP + ADP + H(+). Its pathway is pyrimidine metabolism; CTP biosynthesis via salvage pathway; CTP from cytidine: step 1/3. It functions in the pathway pyrimidine metabolism; UMP biosynthesis via salvage pathway; UMP from uridine: step 1/1. The protein is Uridine kinase of Bacillus thuringiensis (strain Al Hakam).